We begin with the raw amino-acid sequence, 176 residues long: Large ribosomal subunit protein uL6 (176 aa).

The protein belongs to the universal ribosomal protein uL6 family. Part of the 50S ribosomal subunit.

Functionally, this protein binds to the 23S rRNA, and is important in its secondary structure. It is located near the subunit interface in the base of the L7/L12 stalk, and near the tRNA binding site of the peptidyltransferase center. This Paraburkholderia xenovorans (strain LB400) protein is Large ribosomal subunit protein uL6.